The primary structure comprises 82 residues: Putative membrane protein insertion efficiency factor (82 aa).

The protein belongs to the UPF0161 family.

The protein resides in the cell inner membrane. In terms of biological role, could be involved in insertion of integral membrane proteins into the membrane. The sequence is that of Putative membrane protein insertion efficiency factor from Rickettsia peacockii (strain Rustic).